The primary structure comprises 243 residues: MALVKEVLVVLNRLSPFELQESWDNSGLNVGSENSEFSEIVACLEITLKIALNAPQNALIITHHPLIFKPLKTLNDEIYPGNILKILIQKNVSVISMHTNFDKTHLNKHFAHALLEFDGLVEKGLMLVKENANIEFDALVKKIKSSLGVGSLACVKSSQTIKDLAFVCGSGASMFSSLKAQSCLITGDVKYHDAMIAQSLGISLIDATHYYSERGFALIVAEILHSFNYLVTIENFKNPLQII.

A divalent metal cation-binding residues include His63, His64, Asp102, His209, and Glu213.

Belongs to the GTP cyclohydrolase I type 2/NIF3 family. As to quaternary structure, homohexamer.

It carries out the reaction GTP + H2O = 7,8-dihydroneopterin 3'-triphosphate + formate + H(+). The protein operates within cofactor biosynthesis; 7,8-dihydroneopterin triphosphate biosynthesis; 7,8-dihydroneopterin triphosphate from GTP: step 1/1. In terms of biological role, converts GTP to dihydroneopterin triphosphate. Is not active with GDP, GMP, ATP, CTP or UTP as substrate. The sequence is that of GTP cyclohydrolase 1 type 2 from Helicobacter pylori (strain ATCC 700392 / 26695) (Campylobacter pylori).